A 1938-amino-acid chain; its full sequence is Myosin-1 (1938 aa).

In terms of domain architecture, Myosin N-terminal SH3-like spans D33–P82. 2 positions are modified to phosphothreonine: T64 and T69. Positions D86 to D781 constitute a Myosin motor domain. K130 carries the post-translational modification N6,N6,N6-trimethyllysine. G179–T186 contacts ATP. The residue at position 389 (Y389) is a Phosphotyrosine. A Phosphothreonine modification is found at T419. Y424 is subject to Phosphotyrosine. Residue S625 is modified to Phosphoserine. The actin-binding stretch occupies residues L658 to E680. Pros-methylhistidine is present on H756. Residues K760–G774 form an actin-binding region. One can recognise an IQ domain in the interval L784 to S813. A coiled-coil region spans residues L842–E1938. S1091 and S1095 each carry phosphoserine. Disordered regions lie at residues E1124–L1146 and R1152–E1171. The span at A1127 to L1146 shows a compositional bias: basic and acidic residues. 2 positions are modified to phosphoserine: S1161 and S1236. At T1240 the chain carries Phosphothreonine. 2 positions are modified to phosphoserine: S1242 and S1260. Phosphothreonine is present on residues T1264 and T1285. Phosphoserine is present on residues S1287, S1291, S1302, and S1305. Y1463 is subject to Phosphotyrosine. The residue at position 1466 (T1466) is a Phosphothreonine. S1473 is modified (phosphoserine). At Y1491 the chain carries Phosphotyrosine. S1494 is subject to Phosphoserine. T1500 bears the Phosphothreonine mark. S1513 is subject to Phosphoserine. A Phosphothreonine modification is found at T1516. Residues S1541, S1553, S1573, S1599, S1602, S1713, and S1725 each carry the phosphoserine modification. Residues T1729 and T1735 each carry the phosphothreonine modification.

The protein belongs to the TRAFAC class myosin-kinesin ATPase superfamily. Myosin family. In terms of assembly, muscle myosin is a hexameric protein that consists of 2 heavy chain subunits (MHC), 2 alkali light chain subunits (MLC) and 2 regulatory light chain subunits (MLC-2). Interacts with SLC26A5.

It is found in the cytoplasm. Its subcellular location is the myofibril. In terms of biological role, required for normal hearing. It plays a role in cochlear amplification of auditory stimuli, likely through the positive regulation of prestin (SLC26A5) activity and outer hair cell (OHC) electromotility. The protein is Myosin-1 (MYH1) of Bos taurus (Bovine).